The following is a 734-amino-acid chain: Photosystem I P700 chlorophyll a apoprotein A2 (734 aa).

8 helical membrane-spanning segments follow: residues 46–69, 135–158, 175–199, 273–291, 330–353, 369–395, 417–439, and 517–535; these read IFAS…FHVA, LYQG…LHLQ, LNHH…HVAI, IAHH…GHMY, LHFQ…QHMY, AALY…IFLI, AIIS…LYVH, and FLVH…LILV. [4Fe-4S] cluster contacts are provided by Cys559 and Cys568. The next 2 membrane-spanning stretches (helical) occupy residues 575-596 and 643-665; these read AFYL…YWHW and LSVW…MFLI. Chlorophyll a is bound by residues His654, Met662, and Tyr670. Residue Trp671 coordinates phylloquinone. The helical transmembrane segment at 707–727 threads the bilayer; that stretch reads VVGLAHFTVGYFLTYAAFLIA.

The protein belongs to the PsaA/PsaB family. In terms of assembly, the PsaA/B heterodimer binds the P700 chlorophyll special pair and subsequent electron acceptors. PSI consists of a core antenna complex that captures photons, and an electron transfer chain that converts photonic excitation into a charge separation. The cyanobacterial PSI reaction center is composed of one copy each of PsaA,B,C,D,E,F,I,J,K,L,M and X, and forms trimeric complexes. It depends on PSI electron transfer chain: 5 chlorophyll a, 1 chlorophyll a', 2 phylloquinones and 3 4Fe-4S clusters. PSI core antenna: 90 chlorophyll a, 22 carotenoids, 3 phospholipids and 1 galactolipid. P700 is a chlorophyll a/chlorophyll a' dimer, A0 is one or more chlorophyll a, A1 is one or both phylloquinones and FX is a shared 4Fe-4S iron-sulfur center. as a cofactor.

The protein localises to the cellular thylakoid membrane. It catalyses the reaction reduced [plastocyanin] + hnu + oxidized [2Fe-2S]-[ferredoxin] = oxidized [plastocyanin] + reduced [2Fe-2S]-[ferredoxin]. Its function is as follows. PsaA and PsaB bind P700, the primary electron donor of photosystem I (PSI), as well as the electron acceptors A0, A1 and FX. PSI is a plastocyanin/cytochrome c6-ferredoxin oxidoreductase, converting photonic excitation into a charge separation, which transfers an electron from the donor P700 chlorophyll pair to the spectroscopically characterized acceptors A0, A1, FX, FA and FB in turn. Oxidized P700 is reduced on the lumenal side of the thylakoid membrane by plastocyanin or cytochrome c6. The chain is Photosystem I P700 chlorophyll a apoprotein A2 from Synechococcus elongatus (strain ATCC 33912 / PCC 7942 / FACHB-805) (Anacystis nidulans R2).